We begin with the raw amino-acid sequence, 606 residues long: Transmembrane 9 superfamily member 1 (606 aa).

Residues 1-27 form the signal peptide; it reads MTVLGHPRSWSCRWWPLLLLLLLTGRE. N-linked (GlcNAc...) asparagine glycosylation occurs at Asn178. A run of 4 helical transmembrane segments spans residues 237–257, 310–330, 339–359, and 373–393; these read LSII…AVIL, VLGV…MALL, GAIN…SGYV, and VWNI…TWSV. N-linked (GlcNAc...) asparagine glycosylation occurs at Asn401. Helical transmembrane passes span 412–432, 469–489, 499–519, and 535–555; these read ILLL…IGGI, VGGF…FATV, GILF…SIAL, and SVLS…FYYA. A glycan (N-linked (GlcNAc...) asparagine) is linked at Asn559. Residues 570-590 form a helical membrane-spanning segment; that stretch reads FGYSLLTGYVFFLMLGTISFF.

This sequence belongs to the nonaspanin (TM9SF) (TC 9.A.2) family.

The protein localises to the lysosome membrane. Its subcellular location is the cytoplasmic vesicle. The protein resides in the autophagosome membrane. Functionally, plays an essential role in autophagy. This Bos taurus (Bovine) protein is Transmembrane 9 superfamily member 1 (TM9SF1).